The chain runs to 84 residues: Small ribosomal subunit protein bS16 (84 aa).

This sequence belongs to the bacterial ribosomal protein bS16 family.

This is Small ribosomal subunit protein bS16 from Cupriavidus necator (strain ATCC 17699 / DSM 428 / KCTC 22496 / NCIMB 10442 / H16 / Stanier 337) (Ralstonia eutropha).